A 312-amino-acid chain; its full sequence is CD-NTase-associated protein 12 (312 aa).

A TIR domain is found at 5–127; it reads RLFIGSSSEE…FNGLTLARFD (123 aa).

In the C-terminal section; belongs to the bacterial STING family. As to quaternary structure, forms homodimers; in the presence of c-di-GMP forms filaments with an ordered array of parallel-stacked subunits.

It carries out the reaction NAD(+) + H2O = ADP-D-ribose + nicotinamide + H(+). Its activity is regulated as follows. NAD(+) hydrolase activity is strongly stimulated by c-di-GMP, weakly by 3'3'-cGAMP, very weakly by c-di-AMP but not at all by 2'3'-cGAMP. Self-association of TIR domains is required for NADase activity. Its function is as follows. Effector protein of a CBASS antiviral system with NAD(+) hydrolase activity. CBASS (cyclic oligonucleotide-based antiphage signaling system) provides immunity against bacteriophage. The CD-NTase protein synthesizes cyclic nucleotides in response to infection; these serve as specific second messenger signals. The signals activate a diverse range of effectors, leading to bacterial cell death and thus abortive phage infection. A type I-D CBASS(GG) system. Functionally, binds c-di-GMP, does not bind cUMP-AMP. Upon activation by c-di-GMP forms filaments which hydrolyze NAD(+); filament formation is required for enzyme activation. The polypeptide is CD-NTase-associated protein 12 (Niabella drilacis (strain DSM 25811 / CCM 8410 / CCUG 62505 / LMG 26954 / E90)).